The primary structure comprises 172 residues: Myosin regulatory light chain 12B (172 aa).

Basic residues predominate over residues 1-16 (MSSKKAKTKTTKKRPQ). Residues 1–20 (MSSKKAKTKTTKKRPQRATS) are disordered. Threonine 19 is subject to Phosphothreonine; by MLCK and ZIPK/DAPK3. The residue at position 20 (serine 20) is a Phosphoserine; by MLCK and ZIPK/DAPK3. EF-hand domains are found at residues 29 to 64 (SQIQ…LGKN), 98 to 133 (DPED…MGDR), and 134 to 169 (FTDE…GAKD). Residues aspartate 42, asparagine 44, aspartate 46, and aspartate 53 each contribute to the Ca(2+) site.

As to quaternary structure, myosin is a hexamer of 2 heavy chains and 4 light chains: interacts with myosin heavy chain MYO19. In terms of processing, phosphorylation increases the actin-activated myosin ATPase activity and thereby regulates the contractile activity. It is required to generate the driving force in the migration of the cells but not necessary for localization of myosin-2 at the leading edge. Phosphorylation is reduced following epigallocatechin-3-O-gallate treatment. In terms of tissue distribution, ubiquitously expressed in various hematopoietic cells.

Myosin regulatory subunit that plays an important role in regulation of both smooth muscle and nonmuscle cell contractile activity via its phosphorylation. Phosphorylation triggers actin polymerization in vascular smooth muscle. Implicated in cytokinesis, receptor capping, and cell locomotion. The chain is Myosin regulatory light chain 12B (MYL12B) from Homo sapiens (Human).